Consider the following 635-residue polypeptide: RING finger protein 207 (635 aa).

The RING-type zinc finger occupies 25-64 (CPLCHGQYERPCLLDCFHDFCTGCLRGRATDGRLSCPLCQ). A B box-type; atypical zinc finger spans residues 93–145 (SEAVRCANCDLECSQQDAETTYFCNTCGQPLCARCREETHRARMFARHDIVAL). Positions 98, 101, 127, and 132 each coordinate Zn(2+). Positions 422–460 (EHCRHYEDSYRGLQVEVQNLKDQVQELHRDLTKHHSLIK) form a coiled coil. Basic and acidic residues predominate over residues 553-562 (QVPVDEHAEH). Positions 553–635 (QVPVDEHAEH…SGSKGACYQA (83 aa)) are disordered. The span at 589 to 598 (PNGSSWSLSS) shows a compositional bias: polar residues. A compositionally biased stretch (basic and acidic residues) spans 607-622 (NQDHLRPKLEAGDEGW).

Interacts with the core-glycosylated, but not the fully glycosylated form of KCNH2/HERG. Interacts with DNAJA1 and HSPA8. Interacts (via the C-terminus) with HSPA1A; this interaction additively increases KCNH2 expression.

The protein resides in the cytoplasm. Plays a role in cardiac repolarization possibly by stabilizing membrane expression of the potassium channel KCNH2/HERG, or by assisting its synthesis, folding or export from the endoplasmic reticulum, in a heat shock protein-dependent manner. The sequence is that of RING finger protein 207 (Rnf207) from Mus musculus (Mouse).